The chain runs to 264 residues: MEMO1 family protein Mbur_2394 (264 aa).

The protein belongs to the MEMO1 family.

This Methanococcoides burtonii (strain DSM 6242 / NBRC 107633 / OCM 468 / ACE-M) protein is MEMO1 family protein Mbur_2394.